Reading from the N-terminus, the 260-residue chain is DNA-binding protein RFXANK (260 aa).

Residues 1–79 (MELTQPAEDL…STTLTNRQRG (79 aa)) are disordered. A compositionally biased stretch (acidic residues) spans 22-33 (GDPEDPGEEAAD). Over residues 57 to 77 (SVSSPQAGSSLKHSTTLTNRQ) the composition is skewed to polar residues. ANK repeat units follow at residues 89-118 (LDSL…NLVN), 123-152 (RGFT…DPHI), 156-185 (ERES…DINI), 189-218 (NGGT…DLTT), and 222-251 (SGYT…KLFQ).

In terms of assembly, forms homodimers. The RFX heterotetrameric complex consists of 2 molecules of RFX5 and one each of RFXAP and RFX-B/RFXANK; with each subunit representing a separate complementation group. Interacts (via ankyrin repeats) with RFX5 (via PxLPxI/L motif); the interaction is direct. RFX forms cooperative DNA binding complexes with X2BP and CBF/NF-Y. RFX associates with CIITA to form an active transcriptional complex. Interacts with RAF1. Interacts (via ankyrin repeats) with RFX7 (via PxLPxI/L motif). In terms of processing, phosphorylated by RAF1. As to expression, ubiquitous.

The protein resides in the cytoplasm. It is found in the nucleus. In terms of biological role, activates transcription from class II MHC promoters. Activation requires the activity of the MHC class II transactivator/CIITA. May regulate other genes in the cell. RFX binds the X1 box of MHC-II promoters. May also potentiate the activation of RAF1. Isoform 2 is not involved in the positive regulation of MHC class II genes. This is DNA-binding protein RFXANK (RFXANK) from Homo sapiens (Human).